Reading from the N-terminus, the 461-residue chain is MEHLLLFLSCLSMLVSIAFQSVLLPLILHLFSFFLLSFLSFLHFRSFSANNFKHHSLFLVPKRRSFSISVLPAAAPSSPSSNSFLFPSLSHYFYSLRDTTMVKLTESAVYIRTKCSLENVKKLNLWGCGIDDIQVCEKMSLLEVLSLSVNEVKSLAPLQHCKNLKEVYLRKNCLESLDELEYLKELPNLRTLWIDENPCVGEGGQEYRRKVIRVLPNLTKLDDKPVTTTDHQEAIEDSIPECDMHNSHYSARSNRSNSIDLMSRSLYVGPTVVDRIVQPQLLHFGDTSDEERTTYPARSFSVEVPGLPLTEDHTTVYLDSAPQSHIGSRHNLMSQSMYGTLCGTLAEEPSSADGEDDWNDFSIEEDRVMVQMPLAASHRMYQSMHEGMVIEMKRPPVYGRSVSMPRRRATNLTTRASSMSPAREQRLTKIMSAVSVLLDELDTDGLRQVVDEAQRRLKKQR.

LRR repeat units lie at residues 119–140 (NVKK…EKMS), 141–162 (LLEV…QHCK), and 163–184 (NLKE…EYLK). Positions 197 to 237 (NPCVGEGGQEYRRKVIRVLPNLTKLDDKPVTTTDHQEAIED) constitute an LRRCT domain.

This is an uncharacterized protein from Caenorhabditis elegans.